A 64-amino-acid chain; its full sequence is VRDAYIAKPHNCVYECARNEYCNDLCTKDGAKSGYCQWVGKYGNGCWCIELPDNVPIRIPGNCH.

The region spanning 2-64 (RDAYIAKPHN…VPIRIPGNCH (63 aa)) is the LCN-type CS-alpha/beta domain. 4 disulfide bridges follow: Cys-12/Cys-63, Cys-16/Cys-36, Cys-22/Cys-46, and Cys-26/Cys-48.

This sequence belongs to the long (4 C-C) scorpion toxin superfamily. Sodium channel inhibitor family. Alpha subfamily. Expressed by the venom gland.

The protein localises to the secreted. In terms of biological role, binds to sodium channels (Nav) and inhibits the inactivation of the activated channels, thereby blocking neuronal transmission. This toxin is active against mammals and insects. BmK-II is 6-fold less toxic than BmK-I. In Olivierus martensii (Manchurian scorpion), this protein is Neurotoxin BmK-II.